The following is a 241-amino-acid chain: Ribosome assembly factor mrt4 (241 aa).

Belongs to the universal ribosomal protein uL10 family. As to quaternary structure, associates with the pre-60S ribosomal particle.

The protein resides in the nucleus. The protein localises to the nucleolus. It is found in the cytoplasm. Component of the ribosome assembly machinery. Nuclear paralog of the ribosomal protein P0, it binds pre-60S subunits at an early stage of assembly in the nucleolus, and is replaced by P0 in cytoplasmic pre-60S subunits and mature 80S ribosomes. This is Ribosome assembly factor mrt4 from Schizosaccharomyces pombe (strain 972 / ATCC 24843) (Fission yeast).